The primary structure comprises 220 residues: Glutamine amidotransferase-like class 1 domain-containing protein 1 (220 aa).

Positions 1 to 35 (MASERLPSRPACLLVASGAAEGVSAQSFLHCFTLA) are cleaved as a signal peptide. Asn57 and Asn201 each carry an N-linked (GlcNAc...) asparagine glycan.

This sequence belongs to the peptidase C56 family. In terms of assembly, homotetramer. Component of the FERRY complex composed of five subunits, TBCK, PPP1R21, FERRY3, CRYZL1 and GATD1 with a ratio of 1:2:1:2:4, respectively.

It is found in the secreted. The protein localises to the early endosome. Functionally, component of the FERRY complex (Five-subunit Endosomal Rab5 and RNA/ribosome intermediary). The FERRY complex directly interacts with mRNAs and RAB5A, and functions as a RAB5A effector involved in the localization and the distribution of specific mRNAs most likely by mediating their endosomal transport. The complex recruits mRNAs and ribosomes to early endosomes through direct mRNA-interaction. The polypeptide is Glutamine amidotransferase-like class 1 domain-containing protein 1 (Bos taurus (Bovine)).